The sequence spans 450 residues: Probable glucan endo-1,3-beta-glucosidase eglC (450 aa).

An N-terminal signal peptide occupies residues 1 to 18 (MQFTHLVALALALATSEA). E128 (proton donor) is an active-site residue. An N-linked (GlcNAc...) asparagine glycan is attached at N183. E239 functions as the Nucleophile in the catalytic mechanism. N-linked (GlcNAc...) asparagine glycosylation is found at N362 and N368. Low complexity-rich tracts occupy residues 377-395 (SSAI…SGSS) and 405-420 (ASGQ…SAPS). Residues 377–420 (SSAISGSSSGSAAGSSGSSGSSGSGASGASGQSSSSTGSSSAPS) are disordered. A lipid anchor (GPI-anchor amidated asparagine) is attached at N427. Residues 428-450 (AASGLSGSICGAVVAVCLALAAL) constitute a propeptide, removed in mature form.

This sequence belongs to the glycosyl hydrolase 17 family. The GPI-anchor is attached to the protein in the endoplasmic reticulum and serves to target the protein to the cell surface. There, the glucosamine-inositol phospholipid moiety is cleaved off and the GPI-modified mannoprotein is covalently attached via its lipidless GPI glycan remnant to the 1,6-beta-glucan of the outer cell wall layer.

The protein localises to the cell membrane. It is found in the secreted. Its subcellular location is the cell wall. The catalysed reaction is Hydrolysis of (1-&gt;3)-beta-D-glucosidic linkages in (1-&gt;3)-beta-D-glucans.. Glucanases play a role in cell expansion during growth, in cell-cell fusion during mating, and in spore release during sporulation. This enzyme may be involved in beta-glucan degradation and also function biosynthetically as a transglycosylase. This is Probable glucan endo-1,3-beta-glucosidase eglC (eglC) from Aspergillus fumigatus (strain CBS 144.89 / FGSC A1163 / CEA10) (Neosartorya fumigata).